The chain runs to 154 residues: RNA-binding protein PAB1135 (154 aa).

As to quaternary structure, homodimer in solution.

In vitro, binds efficiently double-stranded RNAs in a non-sequence specific manner. The protein is RNA-binding protein PAB1135 of Pyrococcus abyssi (strain GE5 / Orsay).